The primary structure comprises 144 residues: MHFKYIVAVSFLIASAYARSVQNDEQSLSQRDVLEEESLREIRGIGGKILSGLKTALKGAAKELASTYLHRKRTAEEHEVMKRLEAIMRDLDSLDYPEEASERETRGFNQDKIANLFTKKEKRILGPVLGLVGSALGGLIKKIG.

The first 18 residues, 1 to 18 (MHFKYIVAVSFLIASAYA), serve as a signal peptide directing secretion. 2 consecutive propeptides follow at residues 19–43 (RSVQ…REIR) and 73–122 (RTAE…KKEK). Ile-143 is subject to Isoleucine amide.

The protein belongs to the bombinin family. In terms of tissue distribution, expressed by the skin glands.

Its subcellular location is the secreted. Functionally, maximin-3 shows antibacterial activity against both Gram-positive and Gram-negative bacteria. It also shows antimicrobial activity against the fungus C.albicans, but not against A.flavus nor P.uticale. It has little hemolytic activity. It possess a significant cytotoxicity against tumor cell lines. It possess a significant anti-HIV activity. It shows high spermicidal activity. In terms of biological role, maximin-H11 shows antimicrobial activity against bacteria and against the fungus C.albicans. Shows strong hemolytic activity. The protein is Maximins 3/H11 type 2 of Bombina maxima (Giant fire-bellied toad).